The chain runs to 320 residues: Ferrochelatase (320 aa).

Fe cation is bound by residues H194 and E275.

It belongs to the ferrochelatase family.

The protein resides in the cytoplasm. The enzyme catalyses heme b + 2 H(+) = protoporphyrin IX + Fe(2+). The protein operates within porphyrin-containing compound metabolism; protoheme biosynthesis; protoheme from protoporphyrin-IX: step 1/1. Its function is as follows. Catalyzes the ferrous insertion into protoporphyrin IX. The chain is Ferrochelatase from Klebsiella pneumoniae (strain 342).